The primary structure comprises 282 residues: Energy-coupling factor transporter ATP-binding protein EcfA2 (282 aa).

The 234-residue stretch at 1 to 234 folds into the ABC transporter domain; it reads MKGSPFEKVA…ADELVALGLD (234 aa). An ATP-binding site is contributed by 28 to 35; the sequence is GHTGSGKS.

This sequence belongs to the ABC transporter superfamily. Energy-coupling factor EcfA family. In terms of assembly, forms a stable energy-coupling factor (ECF) transporter complex composed of 2 membrane-embedded substrate-binding proteins (S component), 2 ATP-binding proteins (A component) and 2 transmembrane proteins (T component).

It localises to the cell membrane. In terms of biological role, ATP-binding (A) component of a common energy-coupling factor (ECF) ABC-transporter complex. Unlike classic ABC transporters this ECF transporter provides the energy necessary to transport a number of different substrates. This Halalkalibacterium halodurans (strain ATCC BAA-125 / DSM 18197 / FERM 7344 / JCM 9153 / C-125) (Bacillus halodurans) protein is Energy-coupling factor transporter ATP-binding protein EcfA2.